The following is a 1102-amino-acid chain: Putative helicase/primase complex protein (1102 aa).

Disordered stretches follow at residues 1031 to 1057 (TKEE…EETC) and 1082 to 1102 (EETC…FTET).

This sequence belongs to the asfivirus F1055L family.

May be involved in DNA replication. This chain is Putative helicase/primase complex protein, found in African swine fever virus (isolate Tick/Malawi/Lil 20-1/1983) (ASFV).